We begin with the raw amino-acid sequence, 232 residues long: Small ribosomal subunit protein uS2 (232 aa).

It belongs to the universal ribosomal protein uS2 family.

This Baumannia cicadellinicola subsp. Homalodisca coagulata protein is Small ribosomal subunit protein uS2.